Here is a 255-residue protein sequence, read N- to C-terminus: Hydroxyacylglutathione hydrolase (255 aa).

The Zn(2+) site is built by His-55, His-57, Asp-59, His-60, His-113, Asp-132, and His-170.

The protein belongs to the metallo-beta-lactamase superfamily. Glyoxalase II family. Monomer. The cofactor is Zn(2+).

It catalyses the reaction an S-(2-hydroxyacyl)glutathione + H2O = a 2-hydroxy carboxylate + glutathione + H(+). It functions in the pathway secondary metabolite metabolism; methylglyoxal degradation; (R)-lactate from methylglyoxal: step 2/2. Its function is as follows. Thiolesterase that catalyzes the hydrolysis of S-D-lactoyl-glutathione to form glutathione and D-lactic acid. This is Hydroxyacylglutathione hydrolase from Methylobacterium nodulans (strain LMG 21967 / CNCM I-2342 / ORS 2060).